A 100-amino-acid chain; its full sequence is Urease subunit gamma (100 aa).

It belongs to the urease gamma subunit family. As to quaternary structure, heterotrimer of UreA (gamma), UreB (beta) and UreC (alpha) subunits. Three heterotrimers associate to form the active enzyme.

It localises to the cytoplasm. The enzyme catalyses urea + 2 H2O + H(+) = hydrogencarbonate + 2 NH4(+). It participates in nitrogen metabolism; urea degradation; CO(2) and NH(3) from urea (urease route): step 1/1. This is Urease subunit gamma from Photorhabdus laumondii subsp. laumondii (strain DSM 15139 / CIP 105565 / TT01) (Photorhabdus luminescens subsp. laumondii).